A 220-amino-acid chain; its full sequence is U1 small nuclear ribonucleoprotein C (220 aa).

A Matrin-type zinc finger spans residues 4–36; the sequence is YYCDYCDIYLTHDSMNARKAHNSGRNHVANVRD. Pro residues-rich tracts occupy residues 88–130 and 147–165; these read PGPP…PFLP and PPFPPNTASPNPGMPPFRP. Positions 88–220 are disordered; that stretch reads PGPPPPGAFP…HPDRLRMLGQ (133 aa). Residues 166–200 are compositionally biased toward low complexity; the sequence is PMGMGMPPAPAQAQAQGSPMGMPQQGQQGTFTPTQ. The span at 211–220 shows a compositional bias: basic and acidic residues; that stretch reads HPDRLRMLGQ.

This sequence belongs to the U1 small nuclear ribonucleoprotein C family. In terms of assembly, U1 snRNP is composed of the 7 core Sm proteins B/B', D1, D2, D3, E, F and G that assemble in a heptameric protein ring on the Sm site of the small nuclear RNA to form the core snRNP, and at least 3 U1 snRNP-specific proteins U1-70K, U1-A and U1-C. U1-C interacts with U1 snRNA and the 5' splice-site region of the pre-mRNA.

The protein resides in the nucleus. In terms of biological role, component of the spliceosomal U1 snRNP, which is essential for recognition of the pre-mRNA 5' splice-site and the subsequent assembly of the spliceosome. U1-C is directly involved in initial 5' splice-site recognition for both constitutive and regulated alternative splicing. The interaction with the 5' splice-site seems to precede base-pairing between the pre-mRNA and the U1 snRNA. Stimulates commitment or early (E) complex formation by stabilizing the base pairing of the 5' end of the U1 snRNA and the 5' splice-site region. The protein is U1 small nuclear ribonucleoprotein C of Cryptococcus neoformans var. neoformans serotype D (strain JEC21 / ATCC MYA-565) (Filobasidiella neoformans).